The following is a 288-amino-acid chain: MGRLTEAAAAGGGASAARSAGPPPAPLPLSSTSPGCAAAMASSEEDGTNGGASEASDEREAVGKRRRLGLLATIWLTFYNIAMTAGWLVLAIAMVRFYMEKGTHKGLYKSIQKTLKFFQTFALLEIVHCLIGIVPTSVLVAGVQVSSRIFMVWLVTHSIKPIQNEESVVLFLVAWTVTEITRYSFYTFSLLDHLPYFIKWARYNFFIILYPVGVAGELLTIYAALPYVKKTGMFSIRLPNKYNVSFDYYYFLLITMASYIPLFPQLYFHMLRQRRKVLHGEVIVEKDD.

The interval 1–59 (MGRLTEAAAAGGGASAARSAGPPPAPLPLSSTSPGCAAAMASSEEDGTNGGASEASDER) is disordered. Residues 1 to 75 (MGRLTEAAAA…RRLGLLATIW (75 aa)) are Cytoplasmic-facing. A helical membrane pass occupies residues 76–95 (LTFYNIAMTAGWLVLAIAMV). Residues 96-114 (RFYMEKGTHKGLYKSIQKT) lie on the Lumenal side of the membrane. A helical transmembrane segment spans residues 115-131 (LKFFQTFALLEIVHCLI). At 132–141 (GIVPTSVLVA) the chain is on the cytoplasmic side. Residues 142–159 (GVQVSSRIFMVWLVTHSI) form a helical membrane-spanning segment. At 160 to 165 (KPIQNE) the chain is on the lumenal side. Residues 166-180 (ESVVLFLVAWTVTEI) traverse the membrane as a helical segment. The Cytoplasmic portion of the chain corresponds to 181–203 (TRYSFYTFSLLDHLPYFIKWARY). A helical transmembrane segment spans residues 204–221 (NFFIILYPVGVAGELLTI). Catalysis depends on residues tyrosine 210 and glutamate 217. The Lumenal segment spans residues 222–251 (YAALPYVKKTGMFSIRLPNKYNVSFDYYYF). Asparagine 243 carries an N-linked (GlcNAc...) asparagine glycan. A helical transmembrane segment spans residues 252-269 (LLITMASYIPLFPQLYFH). Over 270-288 (MLRQRRKVLHGEVIVEKDD) the chain is Cytoplasmic.

Belongs to the very long-chain fatty acids dehydratase HACD family. As to quaternary structure, may interact with enzymes of the ELO family (including ELOVL1); with those enzymes that mediate condensation, the first of the four steps of the reaction cycle responsible for fatty acids elongation, may be part of a larger fatty acids elongase complex. Interacts with TECR. N-glycosylated. In terms of tissue distribution, expressed in heart.

Its subcellular location is the endoplasmic reticulum membrane. It catalyses the reaction a very-long-chain (3R)-3-hydroxyacyl-CoA = a very-long-chain (2E)-enoyl-CoA + H2O. The catalysed reaction is (3R)-hydroxyhexadecanoyl-CoA = (2E)-hexadecenoyl-CoA + H2O. It carries out the reaction (3R)-hydroxyoctadecanoyl-CoA = (2E)-octadecenoyl-CoA + H2O. The enzyme catalyses (3R)-hydroxyeicosanoyl-CoA = (2E)-eicosenoyl-CoA + H2O. It catalyses the reaction (3R)-hydroxydocosanoyl-CoA = (2E)-docosenoyl-CoA + H2O. The catalysed reaction is (3R)-hydroxytetracosanoyl-CoA = (2E)-tetracosenoyl-CoA + H2O. It carries out the reaction (3R)-hydroxyhexacosanoyl-CoA = (2E)-hexacosenoyl-CoA + H2O. Its pathway is lipid metabolism; fatty acid biosynthesis. Catalyzes the third of the four reactions of the long-chain fatty acids elongation cycle. This endoplasmic reticulum-bound enzymatic process, allows the addition of two carbons to the chain of long- and very long-chain fatty acids/VLCFAs per cycle. This enzyme catalyzes the dehydration of the 3-hydroxyacyl-CoA intermediate into trans-2,3-enoyl-CoA, within each cycle of fatty acid elongation. Thereby, it participates in the production of VLCFAs of different chain lengths that are involved in multiple biological processes as precursors of membrane lipids and lipid mediators. In Ovis aries (Sheep), this protein is Very-long-chain (3R)-3-hydroxyacyl-CoA dehydratase 1 (HACD1).